Consider the following 111-residue polypeptide: Pyrimidine/purine nucleoside phosphorylase 1 (111 aa).

This sequence belongs to the nucleoside phosphorylase PpnP family.

It carries out the reaction a purine D-ribonucleoside + phosphate = a purine nucleobase + alpha-D-ribose 1-phosphate. It catalyses the reaction adenosine + phosphate = alpha-D-ribose 1-phosphate + adenine. The catalysed reaction is cytidine + phosphate = cytosine + alpha-D-ribose 1-phosphate. The enzyme catalyses guanosine + phosphate = alpha-D-ribose 1-phosphate + guanine. It carries out the reaction inosine + phosphate = alpha-D-ribose 1-phosphate + hypoxanthine. It catalyses the reaction thymidine + phosphate = 2-deoxy-alpha-D-ribose 1-phosphate + thymine. The catalysed reaction is uridine + phosphate = alpha-D-ribose 1-phosphate + uracil. The enzyme catalyses xanthosine + phosphate = alpha-D-ribose 1-phosphate + xanthine. Catalyzes the phosphorolysis of diverse nucleosides, yielding D-ribose 1-phosphate and the respective free bases. Can use uridine, adenosine, guanosine, cytidine, thymidine, inosine and xanthosine as substrates. Also catalyzes the reverse reactions. This is Pyrimidine/purine nucleoside phosphorylase 1 from Psychrobacter cryohalolentis (strain ATCC BAA-1226 / DSM 17306 / VKM B-2378 / K5).